The following is a 441-amino-acid chain: Protein C-ets-1 (441 aa).

An N6-acetyllysine; alternate mark is found at lysine 8 and lysine 15. Glycyl lysine isopeptide (Lys-Gly) (interchain with G-Cter in SUMO2); alternate cross-links involve residues lysine 8 and lysine 15. A Phosphothreonine; by MAPK modification is found at threonine 38. The 86-residue stretch at 51-136 (ATFSGFTKEQ…EHLEILQKED (86 aa)) folds into the PNT domain. The tract at residues 130-243 (EILQKEDVKP…DNMCMGRTSR (114 aa)) is activation domain; required for transcription activation. Residue lysine 138 forms a Glycyl lysine isopeptide (Lys-Gly) (interchain with G-Cter in SUMO2) linkage. At tyrosine 223 the chain carries Phosphotyrosine. Lysine 227 participates in a covalent cross-link: Glycyl lysine isopeptide (Lys-Gly) (interchain with G-Cter in SUMO). Phosphoserine is present on residues serine 251 and serine 254. A Phosphothreonine modification is found at threonine 265. Phosphoserine occurs at positions 267, 270, 282, and 285. The tract at residues 304–312 (FKDYVRDRA) is helix HI-1. Residue lysine 305 is modified to N6-acetyllysine. Residues 323 to 330 (AAALAGYT) are helix HI-2. Positions 335–415 (IQLWQFLLEL…AGKRYVYRFV (81 aa)) form a DNA-binding region, ETS. Residues 418–422 (LQSLL) are helix H4. The helix H5 stretch occupies residues 426–432 (PEELHAM).

This sequence belongs to the ETS family. Binds DNA as a homodimer; homodimerization is required for transcription activation. Interacts with MAF and MAFB. Interacts with PAX5; the interaction alters DNA-binding properties. Interacts with DAXX. Interacts with UBE2I. Interacts with SP100; the interaction is direct and modulates ETS1 transcriptional activity. Sumoylated on Lys-15 and Lys-227, preferentially with SUMO2; which inhibits transcriptional activity. In terms of processing, ubiquitinated; which induces proteasomal degradation. Post-translationally, phosphorylation at Ser-251, Ser-282 and Ser-285 by CaMK2/CaMKII in response to calcium signaling decreases affinity for DNA: an increasing number of phosphoserines causes DNA-binding to become progressively weaker. As to expression, highly expressed within lymphoid cells. Isoforms c-ETS-1A and Ets-1 p27 are both detected in all fetal tissues tested, but vary with tissue type in adult tissues. None is detected in brain or kidney.

It is found in the nucleus. It localises to the cytoplasm. Autoinhibited by a module composed of four alpha helices (HI-1, HI-2, H4, and H5) that flank the DNA-binding ETS domain, reducing the affinity for DNA. Phosphorylation by CaMK2/CaMKII in response to calcium signaling decreases affinity for DNA. Its function is as follows. Transcription factor. Directly controls the expression of cytokine and chemokine genes in a wide variety of different cellular contexts. May control the differentiation, survival and proliferation of lymphoid cells. May also regulate angiogenesis through regulation of expression of genes controlling endothelial cell migration and invasion. Acts as a dominant-negative for isoform c-ETS-1A. The polypeptide is Protein C-ets-1 (ETS1) (Homo sapiens (Human)).